The chain runs to 747 residues: Beta-glucosidase BoGH3A (747 aa).

A signal peptide spans 1 to 26 (MIIGIMKTFLLTICFLSVQTGMVAIA). Asp273 is a catalytic residue.

It belongs to the glycosyl hydrolase 3 family.

Its subcellular location is the periplasm. The catalysed reaction is Hydrolysis of terminal, non-reducing beta-D-glucosyl residues with release of beta-D-glucose.. It functions in the pathway glucan metabolism; xyloglucan degradation. In terms of biological role, catalyzes the hydrolysis of terminal, non-reducing beta-D-glucosyl residues with release of beta-D-glucose in xyloglucan degradation, leading to remove the backbone 'G' units. This Bacteroides ovatus (strain ATCC 8483 / DSM 1896 / JCM 5824 / BCRC 10623 / CCUG 4943 / NCTC 11153) protein is Beta-glucosidase BoGH3A.